We begin with the raw amino-acid sequence, 349 residues long: UDP-N-acetylenolpyruvoylglucosamine reductase (349 aa).

Residues 25 to 213 enclose the FAD-binding PCMH-type domain; sequence VGPVARRLVT…VEQGERTDPQ (189 aa). The active site involves Arg-165. Ser-242 functions as the Proton donor in the catalytic mechanism. Glu-341 is a catalytic residue.

The protein belongs to the MurB family. Requires FAD as cofactor.

It is found in the cytoplasm. The enzyme catalyses UDP-N-acetyl-alpha-D-muramate + NADP(+) = UDP-N-acetyl-3-O-(1-carboxyvinyl)-alpha-D-glucosamine + NADPH + H(+). The protein operates within cell wall biogenesis; peptidoglycan biosynthesis. In terms of biological role, cell wall formation. The chain is UDP-N-acetylenolpyruvoylglucosamine reductase from Mycolicibacterium gilvum (strain PYR-GCK) (Mycobacterium gilvum (strain PYR-GCK)).